We begin with the raw amino-acid sequence, 592 residues long: V-type ATP synthase alpha chain 2 (592 aa).

Position 237–244 (237–244) interacts with ATP; it reads GGFGTGKT.

It belongs to the ATPase alpha/beta chains family.

The enzyme catalyses ATP + H2O + 4 H(+)(in) = ADP + phosphate + 5 H(+)(out). In terms of biological role, produces ATP from ADP in the presence of a proton gradient across the membrane. The V-type alpha chain is a catalytic subunit. The polypeptide is V-type ATP synthase alpha chain 2 (Clostridium tetani (strain Massachusetts / E88)).